Reading from the N-terminus, the 355-residue chain is Probable nitronate monooxygenase (355 aa).

FMN contacts are provided by residues Asn71, Gln175, Gly180, Gly218, and 237 to 240 (QMGT).

It belongs to the nitronate monooxygenase family. NMO class I subfamily. FMN is required as a cofactor.

It catalyses the reaction 3 propionate 3-nitronate + 3 O2 + H2O = 3 3-oxopropanoate + 2 nitrate + nitrite + H2O2 + 3 H(+). Its function is as follows. Nitronate monooxygenase that uses molecular oxygen to catalyze the oxidative denitrification of alkyl nitronates. Acts on propionate 3-nitronate (P3N), the presumed physiological substrate. Probably functions in the detoxification of P3N, a metabolic poison produced by plants and fungi as a defense mechanism. The chain is Probable nitronate monooxygenase from Staphylococcus aureus (strain JH1).